Here is a 549-residue protein sequence, read N- to C-terminus: Ceramide kinase 1 (549 aa).

The region spanning 162 to 316 (NRPKNIIIFI…VDVCTVHQHQ (155 aa)) is the DAGKc domain. ATP is bound by residues 172 to 174 (NPF) and 205 to 209 (TERAN). Residue 233 to 236 (GGDG) coordinates substrate. The Proton donor/acceptor role is filled by Asp-235. Residues Glu-240, 277–279 (GSA), Arg-342, Arg-348, and 500–502 (DGE) contribute to the ATP site.

It carries out the reaction an N-acylsphing-4-enine + ATP = an N-acylsphing-4-enine 1-phosphate + ADP + H(+). The catalysed reaction is an N-acyl-15-methylhexadecasphing-4-enine + ATP = an N-acyl-15-methylhexadecasphing-4-enine-1-phosphate + ADP + H(+). The protein operates within lipid metabolism; sphingolipid metabolism. Catalyzes the phosphorylation of ceramide to form ceramide 1-phosphate. C.elegans contain specific sphingoid bases, which are unique or different in structure compared to the sphingoid bases found in other animals. Two examples of these distinctive compounds are: 15-methylhexadecasphinganine and 15-methylhexadecasphing-4-enine. In Caenorhabditis elegans, this protein is Ceramide kinase 1.